Reading from the N-terminus, the 607-residue chain is Cytosolic Fe-S cluster assembly factor nar1 (607 aa).

Cys20 serves as a coordination point for [4Fe-4S] cluster. The interval 28–47 (PKNESSNSQNPYEVTTEDKV) is disordered. A compositionally biased stretch (polar residues) spans 29 to 40 (KNESSNSQNPYE). [4Fe-4S] cluster-binding residues include Cys62, Cys65, Cys68, Cys214, and Cys269. A disordered region spans residues 439-461 (ARVPAASAGGNRRQPISRNSASA). The span at 452–461 (QPISRNSASA) shows a compositional bias: polar residues. 2 residues coordinate [4Fe-4S] cluster: Cys475 and Cys479. The segment covering 494-505 (ASTSTQSVTAVE) has biased composition (polar residues). A disordered region spans residues 494-513 (ASTSTQSVTAVENPSKPTPH).

It belongs to the NARF family.

In terms of biological role, component of the cytosolic Fe/S protein assembly machinery. Required for maturation of extramitochondrial Fe/S proteins. May play a role in the transfer of pre-assembled Fe/S clusters to target apoproteins. The sequence is that of Cytosolic Fe-S cluster assembly factor nar1 (nar1) from Aspergillus oryzae (strain ATCC 42149 / RIB 40) (Yellow koji mold).